Here is a 1111-residue protein sequence, read N- to C-terminus: NBPF family member NBPF9 (1111 aa).

Residues 70 to 130 (MLRNERQFKE…RSLNEHLQAL (61 aa)) are a coiled coil. The interval 161 to 198 (KLSPENDEDEDEDVQVEEDEKVLESSAPREVQKAEESK) is disordered. The span at 165-181 (ENDEDEDEDVQVEEDEK) shows a compositional bias: acidic residues. Positions 165–259 (ENDEDEDEDV…ECQDALNILP (95 aa)) constitute an Olduvai 1 domain. A coiled-coil region spans residues 341–401 (MLRNERQFKE…RSLNEHLQAL (61 aa)). 8 consecutive Olduvai domains span residues 436-528 (ENDN…HIIP), 529-600 (ENES…VDIG), 601-692 (RHRW…PSCP), 695-750 (SREL…LDLD), 751-843 (RIKK…RSKK), 844-919 (KRRR…LDVD), 920-1012 (RIKK…RSKK), and 1013-1111 (ERRR…IFPQ). 2 disordered regions span residues 451–474 (EKVQ…PEDS) and 510–569 (TLIG…STPS). Composition is skewed to acidic residues over residues 530-539 (NESDDEEEEE) and 550-562 (ESEE…ESWD). 2 disordered regions span residues 829-871 (KKGK…LDEK) and 999-1033 (KGKG…PRLN). 2 stretches are compositionally biased toward basic residues: residues 831–849 (GKGK…RRGR) and 1000–1018 (GKGK…RRGR).

The protein belongs to the NBPF family. As to expression, expressed in a neuroblastoma cell line.

The protein localises to the cytoplasm. This is NBPF family member NBPF9 from Homo sapiens (Human).